Consider the following 180-residue polypeptide: UPF0227 protein YcfP (180 aa).

It belongs to the UPF0227 family.

The protein is UPF0227 protein YcfP of Salmonella arizonae (strain ATCC BAA-731 / CDC346-86 / RSK2980).